The following is a 475-amino-acid chain: UDP-N-acetylmuramate--L-alanine ligase (475 aa).

114–120 (GTHGKTT) contacts ATP.

The protein belongs to the MurCDEF family.

Its subcellular location is the cytoplasm. The enzyme catalyses UDP-N-acetyl-alpha-D-muramate + L-alanine + ATP = UDP-N-acetyl-alpha-D-muramoyl-L-alanine + ADP + phosphate + H(+). The protein operates within cell wall biogenesis; peptidoglycan biosynthesis. In terms of biological role, cell wall formation. The chain is UDP-N-acetylmuramate--L-alanine ligase from Bartonella bacilliformis (strain ATCC 35685 / KC583 / Herrer 020/F12,63).